A 665-amino-acid polypeptide reads, in one-letter code: Sodium-dependent phosphate transporter 1-B (665 aa).

A run of 6 helical transmembrane segments spans residues 26–46 (YMWL…SVGA), 67–87 (ACIL…AKVS), 107–127 (LMAG…AASF), 163–183 (IVAS…VLFY), 202–222 (ALPF…MFTG), and 235–255 (GVLL…WFAV). Disordered regions lie at residues 294 to 345 (VPEE…APKT) and 423 to 442 (ESEF…AQER). Over residues 296-306 (EESSVLSSSTP) the composition is skewed to low complexity. Basic and acidic residues predominate over residues 329–338 (ADQKDCKESD). Helical transmembrane passes span 499–519 (VSML…FAHG), 548–568 (TPIW…WVWG), 588–608 (FSIE…GLPV), and 638–658 (IFMA…AIMA).

The protein belongs to the inorganic phosphate transporter (PiT) (TC 2.A.20) family.

It localises to the membrane. Sodium-phosphate symporter which plays a fundamental housekeeping role in phosphate transport. In Danio rerio (Zebrafish), this protein is Sodium-dependent phosphate transporter 1-B (slc20a1b).